The following is an 83-amino-acid chain: Mu-theraphotoxin-Hhn2c (83 aa).

A signal peptide spans 1–21 (MKASMFLALAGLVLLFVVGYA). The propeptide occupies 22–48 (SESEEKEFPIELLSKIFAVDVFKGEER). Intrachain disulfides connect C50–C65, C57–C70, and C64–C77. L81 bears the Leucine amide mark.

The protein belongs to the neurotoxin 10 (Hwtx-1) family. 15 (Hntx-3) subfamily. Monomer. Expressed by the venom gland.

The protein resides in the secreted. In terms of biological role, lethal neurotoxin. Selectively blocks tetrodotoxin-sensitive voltage-gated sodium channels (Nav). Does not affect tetrodotoxin-resistant voltage-gated sodium channels or calcium channels. This Cyriopagopus hainanus (Chinese bird spider) protein is Mu-theraphotoxin-Hhn2c.